Here is a 493-residue protein sequence, read N- to C-terminus: Cysteine--tRNA ligase (493 aa).

A Zn(2+)-binding site is contributed by Cys-29. Positions 31-41 match the 'HIGH' region motif; the sequence is PTVYDFAHIGN. Cys-227, His-252, and Glu-256 together coordinate Zn(2+). The short motif at 285–289 is the 'KMSKS' region element; the sequence is KMSKS. Position 288 (Lys-288) interacts with ATP.

It belongs to the class-I aminoacyl-tRNA synthetase family. In terms of assembly, monomer. Requires Zn(2+) as cofactor.

Its subcellular location is the cytoplasm. The catalysed reaction is tRNA(Cys) + L-cysteine + ATP = L-cysteinyl-tRNA(Cys) + AMP + diphosphate. In Rhodopseudomonas palustris (strain HaA2), this protein is Cysteine--tRNA ligase.